The following is a 189-amino-acid chain: MCDKIFHNLSGKTLVATPYVITKGIYHKSLIYMLSHTEEGAIGLIFNRLVNHVDLKSFFKIKEDKITSQVMVPIYLGGPIEHEKGFFLHSRDYNKNLLLDFHNDLAVSSNLEISEDIAFGKGPKNSLFIVGYTAWKPGQLEEELEKNLWLVMDCSKEFIFAENPENKWHNALKHLGIDEIYFSSQIGNA.

It belongs to the UPF0301 (AlgH) family.

The polypeptide is UPF0301 protein RP032 (Rickettsia prowazekii (strain Madrid E)).